The primary structure comprises 193 residues: Thymidine kinase (193 aa).

Position 9–16 (9–16) interacts with ATP; the sequence is AAMNAGKS.

Belongs to the thymidine kinase family.

The catalysed reaction is thymidine + ATP = dTMP + ADP + H(+). In terms of biological role, this thymidine kinase is one of the enzymes that catalyze DNA precursor synthesis. Although tk is a nonessential gene, some strains of host E.coli do not support the growth of phages that lack this gene. The polypeptide is Thymidine kinase (TK) (Escherichia coli (Bacteriophage T4)).